The primary structure comprises 127 residues: Chorismate mutase AroH (127 aa).

The Chorismate mutase aroH-type domain maps to 3-121; it reads IRGIRGATTV…VVVLRPDLSL (119 aa). Prephenate-binding positions include arginine 7, 74 to 78, arginine 90, and tyrosine 108; that span reads TCMQE.

In terms of assembly, homotrimer.

It localises to the cytoplasm. The catalysed reaction is chorismate = prephenate. It participates in metabolic intermediate biosynthesis; prephenate biosynthesis; prephenate from chorismate: step 1/1. Catalyzes the Claisen rearrangement of chorismate to prephenate. Probably involved in the aromatic amino acid biosynthesis. This chain is Chorismate mutase AroH, found in Bacillus subtilis (strain 168).